The sequence spans 222 residues: Sugar fermentation stimulation protein homolog (222 aa).

This sequence belongs to the SfsA family.

The sequence is that of Sugar fermentation stimulation protein homolog from Thermoplasma acidophilum (strain ATCC 25905 / DSM 1728 / JCM 9062 / NBRC 15155 / AMRC-C165).